The chain runs to 475 residues: Ankyrin repeat, SAM and basic leucine zipper domain-containing protein 1 (475 aa).

The segment covering 1–10 has biased composition (low complexity); it reads MAAGRLRGLA. Positions 1-24 are disordered; the sequence is MAAGRLRGLAVAGGGESSESDDDG. Ser-17, Ser-18, and Ser-20 each carry phosphoserine. 6 ANK repeats span residues 45–74, 78–107, 110–144, 148–177, 181–210, and 214–243; these read EKNETFKKALTTGDISLVQELLNSGISVDS, YGWTPLMYAASVSNVELVRVLLDRGANANF, DKQTILITTCSSRGSEEQIVKCVELLLSRNADPNV, RLMTPIMYAARDGHPQVVALLVAHGAEVNT, SGYTALTWAARQGHKNVVLKLLELGADKML, and DGNIPSEIAKRYKHLEIFSLLSLSLNPLKG. One can recognise an SAM domain in the interval 272–334; sequence SYTAFGDLEV…KILAALKELD (63 aa).

In terms of assembly, interacts with DDX4, PIWIL1, RANBP9 and TDRD1.

Its subcellular location is the cytoplasm. Plays a central role during spermatogenesis by repressing transposable elements and preventing their mobilization, which is essential for the germline integrity. Acts via the piRNA metabolic process, which mediates the repression of transposable elements during meiosis by forming complexes composed of piRNAs and Piwi proteins and governs the methylation and subsequent repression of transposons. Its association with pi-bodies suggests a participation in the primary piRNAs metabolic process. Required prior to the pachytene stage to facilitate the production of multiple types of piRNAs, including those associated with repeats involved in the regulation of retrotransposons. May act by mediating protein-protein interactions during germ cell maturation. In Carollia perspicillata (Seba's short-tailed bat), this protein is Ankyrin repeat, SAM and basic leucine zipper domain-containing protein 1 (ASZ1).